Reading from the N-terminus, the 908-residue chain is Auxin response factor 6 (908 aa).

The disordered stretch occupies residues 1–21; sequence MKLSPSAGGVSDQPPSPPEVA. The TF-B3 DNA-binding region spans 134–236; the sequence is FCKTLTASDT…QLLLGIRRAN (103 aa). A disordered region spans residues 525–556; the sequence is NEQKPQLQPQQQQQESHQQQPQHQQMQQQKHL. The segment covering 526–556 has biased composition (low complexity); sequence EQKPQLQPQQQQQESHQQQPQHQQMQQQKHL. Residues 777–861 enclose the PB1 domain; it reads ATFVKVYKSG…SCIKILSPQE (85 aa).

It belongs to the ARF family. In terms of assembly, homodimers and heterodimers.

The protein resides in the nucleus. Its function is as follows. Auxin response factors (ARFs) are transcriptional factors that bind specifically to the DNA sequence 5'-TGTCTC-3' found in the auxin-responsive promoter elements (AuxREs). The chain is Auxin response factor 6 (ARF6) from Oryza sativa subsp. indica (Rice).